The primary structure comprises 1214 residues: Reverse gyrase (1214 aa).

Residues 1 to 37 form an RG N-terminal-type zinc finger; sequence MKAIYRDMCPNCRGAITDERLAAKNPCDACLDEPISM. Zn(2+) contacts are provided by cysteine 9, cysteine 12, cysteine 27, and cysteine 30. Residues glutamine 89 and 106–113 contribute to the ATP site; that span reads APTGMGKS. The Helicase ATP-binding domain occupies 93 to 252; that stretch reads VKRIIKGKSF…WEIIKLKKQL (160 aa). Residues 213 to 216 carry the DEAD box motif; it reads DDVD. The tract at residues 635 to 1214 is topoisomerase I; that stretch reads DLVKSALMIV…YEEILRYVKS (580 aa). Residues 639 to 802 form the Toprim domain; the sequence is SALMIVESPN…VIKRIEFHEV (164 aa). Glutamate 645 contacts Mg(2+). An RG C-terminal-type zinc finger spans residues 719–748; the sequence is IKRCRDCGHQFVDWEEKGVCPRCGSRNVYD. Positions 722, 725, 738, and 741 each coordinate Zn(2+). Residue aspartate 771 participates in Mg(2+) binding. The 395-residue stretch at 818-1212 folds into the Topo IA-type catalytic domain; it reads NEDRVNAQLV…ELYEEILRYV (395 aa). The active-site O-(5'-phospho-DNA)-tyrosine intermediate is the tyrosine 955.

In the N-terminal section; belongs to the DEAD box helicase family. DDVD subfamily. It in the C-terminal section; belongs to the type IA topoisomerase family. Monomer. It depends on Zn(2+) as a cofactor. Mg(2+) is required as a cofactor.

Its subcellular location is the cytoplasm. The catalysed reaction is ATP + H2O = ADP + phosphate + H(+). Modifies the topological state of DNA by introducing positive supercoils in an ATP-dependent process. Increases the linking number in steps of +1. Binds to single-stranded DNA, transiently cleaves and then rejoins the ends, introducing a positive supercoil in the process. The scissile phosphodiester is attacked by the catalytic tyrosine of the enzyme, resulting in the formation of a DNA-(5'-phosphotyrosyl)-enzyme intermediate. Probably involved in rewinding DNA strands in regions of the chromosome that have opened up to allow replication, transcription, DNA repair and/or for DNA protection. This chain is Reverse gyrase, found in Pyrococcus furiosus (strain ATCC 43587 / DSM 3638 / JCM 8422 / Vc1).